The sequence spans 413 residues: Eukaryotic initiation factor 4A-14 (413 aa).

A Q motif motif is present at residues 40–68 (DSFDAMGLQENLLRGIYAYGFEKPSAIQQ). The Helicase ATP-binding domain maps to 71-241 (IVPFCKGLDV…RKFMSKPVRI (171 aa)). Residue 84–91 (AQSGTGKT) coordinates ATP. A DEAD box motif is present at residues 189-192 (DEAD). The Helicase C-terminal domain occupies 252–413 (GIKQFYVNVD…ELPANVADLL (162 aa)).

This sequence belongs to the DEAD box helicase family. eIF4A subfamily. EIF4F is a multi-subunit complex, the composition of which varies with external and internal environmental conditions. It is composed of at least EIF4A, EIF4E and EIF4G.

It carries out the reaction ATP + H2O = ADP + phosphate + H(+). ATP-dependent RNA helicase which is a subunit of the eIF4F complex involved in cap recognition and is required for mRNA binding to ribosome. In the current model of translation initiation, eIF4A unwinds RNA secondary structures in the 5'-UTR of mRNAs which is necessary to allow efficient binding of the small ribosomal subunit, and subsequent scanning for the initiator codon. The chain is Eukaryotic initiation factor 4A-14 from Nicotiana tabacum (Common tobacco).